Consider the following 84-residue polypeptide: Hepcidin (84 aa).

An N-terminal signal peptide occupies residues 1–24 (MALSSQIWAACLLLLLLLASLTSG). The propeptide occupies 25–54 (SVFPQQTGQLAELQPQDRAGARASWMPMFQ). 4 disulfide bridges follow: C66–C82, C69–C72, C70–C78, and C73–C81.

Belongs to the hepcidin family. As to quaternary structure, interacts with SLC40A1; this interaction promotes SLC40A1 rapid ubiquitination. As to expression, highest expression in liver and to a lesser extent in heart and brain. Low levels in lung, tonsils, salivary gland, trachea, prostate gland, adrenal gland and thyroid gland. Secreted into the urine and blood. Expressed by hepatocytes.

Its subcellular location is the secreted. Functionally, liver-produced hormone that constitutes the main circulating regulator of iron absorption and distribution across tissues. Acts by promoting endocytosis and degradation of ferroportin/SLC40A1, leading to the retention of iron in iron-exporting cells and decreased flow of iron into plasma. Controls the major flows of iron into plasma: absorption of dietary iron in the intestine, recycling of iron by macrophages, which phagocytose old erythrocytes and other cells, and mobilization of stored iron from hepatocytes. Has strong antimicrobial activity against E.coli ML35P N.cinerea and weaker against S.epidermidis, S.aureus and group b streptococcus bacteria. Active against the fungus C.albicans. No activity against P.aeruginosa. The protein is Hepcidin of Homo sapiens (Human).